The chain runs to 85 residues: Small ribosomal subunit protein bS20 (85 aa).

The interval 1-25 is disordered; it reads MANIKSAIKRAKLSEERRAHNASIK.

Belongs to the bacterial ribosomal protein bS20 family.

Its function is as follows. Binds directly to 16S ribosomal RNA. The polypeptide is Small ribosomal subunit protein bS20 (Bacillus anthracis (strain A0248)).